Here is a 337-residue protein sequence, read N- to C-terminus: Ribose-phosphate pyrophosphokinase 4 (337 aa).

The residue at position 2 (S2) is an N-acetylserine. Residues D158 and H160 each coordinate Mg(2+). The tract at residues 241–256 is binding of phosphoribosylpyrophosphate; the sequence is GCHVVIVDDLVQSGGT.

This sequence belongs to the ribose-phosphate pyrophosphokinase family.

It carries out the reaction D-ribose 5-phosphate + ATP = 5-phospho-alpha-D-ribose 1-diphosphate + AMP + H(+). In Arabidopsis thaliana (Mouse-ear cress), this protein is Ribose-phosphate pyrophosphokinase 4 (PRS4).